Reading from the N-terminus, the 120-residue chain is Flagellar protein FliT (120 aa).

Residues 1–50 (MERHQHLLSEYQQILTLSEQMLMLATVENWNTLVDLEMTYLKAVENTANI) form a required for homodimerization region. The segment at 60–98 (LQELLRQKLRSILENEIEIKRLLQRRLDKLSELVGQSTR) is fliD binding.

It belongs to the FliT family. Homodimer. Interacts with FliD and FlhC.

The protein localises to the cytoplasm. It is found in the cytosol. Functionally, dual-function protein that regulates the transcription of class 2 flagellar operons and that also acts as an export chaperone for the filament-capping protein FliD. As a transcriptional regulator, acts as an anti-FlhDC factor; it directly binds FlhC, thus inhibiting the binding of the FlhC/FlhD complex to class 2 promoters, resulting in decreased expression of class 2 flagellar operons. As a chaperone, effects FliD transition to the membrane by preventing its premature polymerization, and by directing it to the export apparatus. The polypeptide is Flagellar protein FliT (Yersinia pestis (strain Pestoides F)).